Reading from the N-terminus, the 214-residue chain is Transcription factor 23 (214 aa).

Disordered stretches follow at residues 1–86 (MSQR…ARER) and 174–214 (DSTT…LGDK). The segment covering 40 to 49 (TRQDPWEERS) has biased composition (basic and acidic residues). Residues 76 to 128 (EASPENAARERSRVRTLRQAFLALQAALPAVPPDTKLSKLDVLVLAASYIAHL) form the bHLH domain. Residues 174–183 (DSTTASTPSQ) are compositionally biased toward polar residues.

As to quaternary structure, forms inactive heterodimeric complexes with TCF3. As to expression, expressed in liver, kidney and spleen.

It is found in the nucleus. Functionally, inhibits E-box-mediated binding and transactivation of bHLH factors. Inhibitory effect is similar to that of ID proteins. Inhibits the formation of TCF3 and MYOD1 homodimers and heterodimers. Lacks DNA binding activity. Seems to play a role in the inhibition of myogenesis. The chain is Transcription factor 23 (TCF23) from Homo sapiens (Human).